The chain runs to 412 residues: Glucose-1-phosphate adenylyltransferase (412 aa).

Residues G169, 184 to 185 (EK), and S201 each bind alpha-D-glucose 1-phosphate.

Belongs to the bacterial/plant glucose-1-phosphate adenylyltransferase family. Homotetramer.

It catalyses the reaction alpha-D-glucose 1-phosphate + ATP + H(+) = ADP-alpha-D-glucose + diphosphate. Its pathway is glycan biosynthesis; glycogen biosynthesis. Involved in the biosynthesis of ADP-glucose, a building block required for the elongation reactions to produce glycogen. Catalyzes the reaction between ATP and alpha-D-glucose 1-phosphate (G1P) to produce pyrophosphate and ADP-Glc. This is Glucose-1-phosphate adenylyltransferase from Geobacter metallireducens (strain ATCC 53774 / DSM 7210 / GS-15).